Consider the following 597-residue polypeptide: Putative Xaa-Pro dipeptidyl-peptidase (597 aa).

Active-site charge relay system residues include Ser-224, Asp-336, and His-367.

This sequence belongs to the peptidase S15 family.

It catalyses the reaction Hydrolyzes Xaa-Pro-|- bonds to release unblocked, N-terminal dipeptides from substrates including Ala-Pro-|-p-nitroanilide and (sequentially) Tyr-Pro-|-Phe-Pro-|-Gly-Pro-|-Ile.. The polypeptide is Putative Xaa-Pro dipeptidyl-peptidase (Bacillus anthracis).